The following is a 351-amino-acid chain: Photosystem II D2 protein (351 aa).

The helical transmembrane segment at 39–59 (CAYLAVGGWLTGTTFVTSWYT) threads the bilayer. Histidine 116 is a chlorophyll a binding site. Residues 123 to 139 (GFCLRQFEIARLVGLRP) form a helical membrane-spanning segment. Glutamine 128 and asparagine 141 together coordinate pheophytin a. A helical membrane pass occupies residues 151–164 (VFVSVFLMYPLGQA). Residue histidine 196 participates in chlorophyll a binding. A helical transmembrane segment spans residues 206–226 (GALLCAIHGATVQNTLFEDGD). Residues histidine 213 and phenylalanine 260 each coordinate a plastoquinone. A Fe cation-binding site is contributed by histidine 213. Histidine 267 serves as a coordination point for Fe cation. Residues 277–293 (GLWTSAFGIVGLALNLR) form a helical membrane-spanning segment.

This sequence belongs to the reaction center PufL/M/PsbA/D family. In terms of assembly, PSII is composed of 1 copy each of membrane proteins PsbA, PsbB, PsbC, PsbD, PsbE, PsbF, PsbH, PsbI, PsbJ, PsbK, PsbL, PsbM, PsbT, PsbX, PsbY, PsbZ, Psb30/Ycf12, at least 3 peripheral proteins of the oxygen-evolving complex and a large number of cofactors. It forms dimeric complexes. Requires The D1/D2 heterodimer binds P680, chlorophylls that are the primary electron donor of PSII, and subsequent electron acceptors. It shares a non-heme iron and each subunit binds pheophytin, quinone, additional chlorophylls, carotenoids and lipids. There is also a Cl(-1) ion associated with D1 and D2, which is required for oxygen evolution. The PSII complex binds additional chlorophylls, carotenoids and specific lipids. as cofactor.

It is found in the plastid. It localises to the chloroplast thylakoid membrane. The catalysed reaction is 2 a plastoquinone + 4 hnu + 2 H2O = 2 a plastoquinol + O2. In terms of biological role, photosystem II (PSII) is a light-driven water:plastoquinone oxidoreductase that uses light energy to abstract electrons from H(2)O, generating O(2) and a proton gradient subsequently used for ATP formation. It consists of a core antenna complex that captures photons, and an electron transfer chain that converts photonic excitation into a charge separation. The D1/D2 (PsbA/PsbD) reaction center heterodimer binds P680, the primary electron donor of PSII as well as several subsequent electron acceptors. D2 is needed for assembly of a stable PSII complex. In Porphyra purpurea (Red seaweed), this protein is Photosystem II D2 protein.